The following is a 497-amino-acid chain: Alkane hydroxylase MAH1 (497 aa).

A helical membrane pass occupies residues 3 to 23; that stretch reads MLGFYVTFIFFLVCLFTYFFL. Cysteine 444 provides a ligand contact to heme.

It belongs to the cytochrome P450 family. Heme is required as a cofactor. In terms of tissue distribution, expressed in the expanding regions of the inflorescence stems, specifically to the epidermal pavement cells, petioles and siliques.

The protein resides in the endoplasmic reticulum membrane. Its function is as follows. Involved in the formation of secondary alcohols and ketones in stem cuticular wax. Catalyzes the hydroxylation of a methylene unit in the middle of alkane molecules to form secondary alcohols and possibly also a second hydroxylation leading to the corresponding ketones. This is Alkane hydroxylase MAH1 from Arabidopsis thaliana (Mouse-ear cress).